The primary structure comprises 224 residues: Putative cobalt transport protein CbiM (224 aa).

Helical transmembrane passes span 8–28, 41–61, 75–95, 108–128, 138–158, and 169–189; these read LPPL…VYGI, AMPM…LKMP, FGAV…VLVF, LGAN…AVWL, EIAM…VTAI, and FFTA…PLAI.

Belongs to the CbiM family. As to quaternary structure, forms an energy-coupling factor (ECF) transporter complex composed of an ATP-binding protein (A component, CbiO), a transmembrane protein (T component, CbiQ) and 2 possible substrate-capture proteins (S components, CbiM and CbiN) of unknown stoichimetry.

It localises to the cell membrane. It participates in cofactor biosynthesis; adenosylcobalamin biosynthesis. Part of the energy-coupling factor (ECF) transporter complex CbiMNOQ involved in cobalt import. The polypeptide is Putative cobalt transport protein CbiM (Methanosphaera stadtmanae (strain ATCC 43021 / DSM 3091 / JCM 11832 / MCB-3)).